We begin with the raw amino-acid sequence, 529 residues long: Extracellular signal-regulated kinase 1 (529 aa).

Disordered stretches follow at residues 1–20 and 100–131; these read MEPE…THQS and QQNQ…SNFN. Polar residues predominate over residues 8-20; that stretch reads FQSQMDSDNTHQS. Positions 100–117 are enriched in low complexity; sequence QQNQQQQSQQMTQQQLQQ. The region spanning 149 to 439 is the Protein kinase domain; the sequence is YSIVKCIGHG…EALAHPYFQS (291 aa). Residues 155–163 and lysine 178 each bind ATP; that span reads IGHGAYGVV. Catalysis depends on aspartate 275, which acts as the Proton acceptor. The residue at position 309 (threonine 309) is a Phosphothreonine. The TXY motif lies at 309–311; it reads TEY. A Phosphotyrosine modification is found at tyrosine 311.

It belongs to the protein kinase superfamily. CMGC Ser/Thr protein kinase family. MAP kinase subfamily. The cofactor is Mg(2+). In terms of processing, dually phosphorylated on Thr-309 and Tyr-311, which activates the enzyme.

It catalyses the reaction L-seryl-[protein] + ATP = O-phospho-L-seryl-[protein] + ADP + H(+). The catalysed reaction is L-threonyl-[protein] + ATP = O-phospho-L-threonyl-[protein] + ADP + H(+). Its activity is regulated as follows. Activated by tyrosine and threonine phosphorylation. Functionally, kinase involved in a signal transduction pathway. The protein is Extracellular signal-regulated kinase 1 (erkA) of Dictyostelium discoideum (Social amoeba).